Reading from the N-terminus, the 366-residue chain is Peroxisomal (S)-2-hydroxy-acid oxidase GLO4 (366 aa).

The FMN hydroxy acid dehydrogenase domain maps to 1-360 (MEDNLPVNVR…TRSHVMTEGD (360 aa)). Position 27 (Tyr27) interacts with a 2-oxocarboxylate. Residues 80-82 (PTG), Ser109, 130-132 (QLY), and Thr158 each bind FMN. Position 132 (Tyr132) interacts with a 2-oxocarboxylate. A 2-oxocarboxylate is bound at residue Arg167. Lys231 and Ser253 together coordinate FMN. Residue His255 is the Proton acceptor of the active site. Arg258 contacts a 2-oxocarboxylate. FMN is bound by residues 286–290 (DGGIR) and 309–310 (XX). A Microbody targeting signal motif is present at residues 364–366 (SLL).

This sequence belongs to the FMN-dependent alpha-hydroxy acid dehydrogenase family. Homotetramer. FMN serves as cofactor.

The protein resides in the peroxisome. The enzyme catalyses a (2S)-2-hydroxycarboxylate + O2 = a 2-oxocarboxylate + H2O2. The protein operates within lipid metabolism; fatty acid metabolism. Its function is as follows. Oxidase that catalyzes the oxidation of a broad range of 2-hydroxyacids to the corresponding 2-oxoacids, with a reduction of O2 to H2O2. May be involved in a general medium- and long-chain fatty acid catabolic pathway such as alpha-oxidation. This is Peroxisomal (S)-2-hydroxy-acid oxidase GLO4 (GLO4) from Oryza sativa subsp. indica (Rice).